The sequence spans 376 residues: Alanine racemase (376 aa).

Lys-40 (proton acceptor; specific for D-alanine) is an active-site residue. N6-(pyridoxal phosphate)lysine is present on Lys-40. A substrate-binding site is contributed by Arg-138. The active-site Proton acceptor; specific for L-alanine is Tyr-270. A substrate-binding site is contributed by Met-317.

This sequence belongs to the alanine racemase family. Pyridoxal 5'-phosphate is required as a cofactor.

It carries out the reaction L-alanine = D-alanine. Its pathway is amino-acid biosynthesis; D-alanine biosynthesis; D-alanine from L-alanine: step 1/1. Functionally, catalyzes the interconversion of L-alanine and D-alanine. May also act on other amino acids. This is Alanine racemase (alr) from Lactobacillus acidophilus (strain ATCC 700396 / NCK56 / N2 / NCFM).